The sequence spans 138 residues: Large ribosomal subunit protein uL16 (138 aa).

Positions 1–16 are enriched in basic residues; sequence MLIPKRVKFRRQHRPN. The disordered stretch occupies residues 1-25; sequence MLIPKRVKFRRQHRPNRSGMSKGGN.

Belongs to the universal ribosomal protein uL16 family. In terms of assembly, part of the 50S ribosomal subunit.

In terms of biological role, binds 23S rRNA and is also seen to make contacts with the A and possibly P site tRNAs. The sequence is that of Large ribosomal subunit protein uL16 from Corynebacterium urealyticum (strain ATCC 43042 / DSM 7109).